The sequence spans 261 residues: Single-strand annealing weakened protein 1 (261 aa).

As to quaternary structure, interacts with MSH2, MSH3, RAD1, RAD10, RAD51 and RAD52.

The protein localises to the nucleus. In terms of biological role, catalyzes 3'-non-homologous tail removal of RAD1/RAD10-dependent single-strand annealing recombination intermediates. Plays a key role in targeting RAD1/RAD10 complex to 3'-flap cleavage substrate in recombination. Also contributes to the integrity of ribosomal DNA arrays. The polypeptide is Single-strand annealing weakened protein 1 (SAW1) (Saccharomyces cerevisiae (strain ATCC 204508 / S288c) (Baker's yeast)).